The sequence spans 461 residues: MSHIRSRFSKPADELVVRYTTSLPFDWRLYQEDIKCSTAHARMLGKQSIISAGDSQSIINGLSDILTEIETGSFVFKPEMEDIHMAIEGRLFELIGEAAGRLHTARSRNDQVATDVHLFVKNTCTSTINKIRTLQGALLKQAEAHQQTALPGYTHLQVAQPVLLSHHLLAYFEMLERDCGRFTDAKKRSDVMPLGSGALAGVPYPLDRKMVAEELGFTAISQNSLDAVSERDFVLEYLSDAAICQMHLSRLSEEMVIWSSAEYAFVELDDAYTTGSSIMPQKKNPDVAELCRGKTGRVYGSLNTMLTVMKGLPLSYNRDLQEDKEPLFECADTLGDSLEVFAGMIKTATFKPERMLRALEKGYVLATDIADYLVGKGESFRSSHGIVARLVSYAISQNKTFGELSLEEYRQFSNLFGNDIYAVDIKSALNARNLTGGTAPKQIAQAIARAKKILAEAGVKN.

This sequence belongs to the lyase 1 family. Argininosuccinate lyase subfamily.

It localises to the cytoplasm. It carries out the reaction 2-(N(omega)-L-arginino)succinate = fumarate + L-arginine. It functions in the pathway amino-acid biosynthesis; L-arginine biosynthesis; L-arginine from L-ornithine and carbamoyl phosphate: step 3/3. The chain is Argininosuccinate lyase from Dehalococcoides mccartyi (strain ATCC BAA-2266 / KCTC 15142 / 195) (Dehalococcoides ethenogenes (strain 195)).